The following is a 339-amino-acid chain: 2-keto-3-deoxygluconate permease (339 aa).

Helical transmembrane passes span I10 to P30, G42 to I62, L77 to P97, G100 to M120, A141 to A161, I163 to A183, V199 to I219, L224 to A244, T254 to A274, and T289 to W309. The interval G315–K339 is disordered. Over residues V320–K339 the composition is skewed to basic and acidic residues.

This sequence belongs to the KdgT transporter family.

Its subcellular location is the cell inner membrane. The catalysed reaction is 2-dehydro-3-deoxy-D-gluconate(in) + H(+)(in) = 2-dehydro-3-deoxy-D-gluconate(out) + H(+)(out). With respect to regulation, uptake is inhibited by the protonophore uncouplers carbonyl cyanide m-chlorophenylhydrazone (CCCP) and 2,4-dinitrophenol, and by NaN(3). Functionally, catalyzes the proton-dependent uptake of 2-keto-3-deoxygluconate (KDG) into the cell. Can also mediate the uptake of glucuronate with a low affinity, and may mediate the uptake of 5-keto-4-deoxyuronate (DKI) and 2,5-diketo-3-deoxygluconate (DKII), which are intermediates in pectin degradation. This is 2-keto-3-deoxygluconate permease from Dickeya chrysanthemi (Pectobacterium chrysanthemi).